The chain runs to 503 residues: tRNA-guanine(15) transglycosylase (503 aa).

Aspartate 86 functions as the Nucleophile in the catalytic mechanism. Residue aspartate 121 participates in substrate binding. Zn(2+) contacts are provided by cysteine 278, cysteine 280, and cysteine 283.

It belongs to the archaeosine tRNA-ribosyltransferase family. Zn(2+) serves as cofactor.

It catalyses the reaction guanosine(15) in tRNA + 7-cyano-7-deazaguanine = 7-cyano-7-carbaguanosine(15) in tRNA + guanine. The protein operates within tRNA modification; archaeosine-tRNA biosynthesis. In terms of biological role, exchanges the guanine residue with 7-cyano-7-deazaguanine (preQ0) at position 15 in the dihydrouridine loop (D-loop) of archaeal tRNAs. This Saccharolobus solfataricus (strain ATCC 35092 / DSM 1617 / JCM 11322 / P2) (Sulfolobus solfataricus) protein is tRNA-guanine(15) transglycosylase.